The primary structure comprises 309 residues: Cytochrome c biogenesis protein CcsA (309 aa).

8 helical membrane-spanning segments follow: residues 18–38 (LGLL…GAVF), 43–63 (SFAV…QLLF), 73–93 (ISNL…GQLL), 102–122 (IIPS…CFVL), 148–168 (VMLS…VLFI), 216–236 (SILI…VWAN), 250–267 (TWAF…HMRI), and 279–299 (LAST…FLGI).

Belongs to the CcmF/CycK/Ccl1/NrfE/CcsA family. In terms of assembly, may interact with ccs1.

It is found in the cellular thylakoid membrane. Functionally, required during biogenesis of c-type cytochromes (cytochrome c6 and cytochrome f) at the step of heme attachment. This chain is Cytochrome c biogenesis protein CcsA, found in Prochlorococcus marinus (strain MIT 9301).